A 350-amino-acid polypeptide reads, in one-letter code: tRNA uridine(34) hydroxylase (350 aa).

Residues 146 to 240 form the Rhodanese domain; that stretch reads DDPDAVFIDM…YARRAREQGL (95 aa). The active-site Cysteine persulfide intermediate is the C200. Over residues 319–328 the composition is skewed to basic and acidic residues; sequence RRRRAGRENG. The disordered stretch occupies residues 319–350; sequence RRRRAGRENGNKIFNKSRGRLNSKLSIPDPAE.

This sequence belongs to the TrhO family.

It carries out the reaction uridine(34) in tRNA + AH2 + O2 = 5-hydroxyuridine(34) in tRNA + A + H2O. Functionally, catalyzes oxygen-dependent 5-hydroxyuridine (ho5U) modification at position 34 in tRNAs. The polypeptide is tRNA uridine(34) hydroxylase (Salmonella schwarzengrund (strain CVM19633)).